The chain runs to 277 residues: Thymidylate synthase (277 aa).

Arg21 serves as a coordination point for dUMP. His51 is a (6R)-5,10-methylene-5,6,7,8-tetrahydrofolate binding site. A dUMP-binding site is contributed by 126 to 127 (RR). Catalysis depends on Cys159, which acts as the Nucleophile. DUMP-binding positions include 179–182 (RSGD), Asn190, and 220–222 (HLY). Asp182 provides a ligand contact to (6R)-5,10-methylene-5,6,7,8-tetrahydrofolate. Ala276 serves as a coordination point for (6R)-5,10-methylene-5,6,7,8-tetrahydrofolate.

The protein belongs to the thymidylate synthase family. Bacterial-type ThyA subfamily. As to quaternary structure, homodimer.

The protein localises to the cytoplasm. The catalysed reaction is dUMP + (6R)-5,10-methylene-5,6,7,8-tetrahydrofolate = 7,8-dihydrofolate + dTMP. It functions in the pathway pyrimidine metabolism; dTTP biosynthesis. Its function is as follows. Catalyzes the reductive methylation of 2'-deoxyuridine-5'-monophosphate (dUMP) to 2'-deoxythymidine-5'-monophosphate (dTMP) while utilizing 5,10-methylenetetrahydrofolate (mTHF) as the methyl donor and reductant in the reaction, yielding dihydrofolate (DHF) as a by-product. This enzymatic reaction provides an intracellular de novo source of dTMP, an essential precursor for DNA biosynthesis. This Alcanivorax borkumensis (strain ATCC 700651 / DSM 11573 / NCIMB 13689 / SK2) protein is Thymidylate synthase.